Consider the following 141-residue polypeptide: Hemoglobin subunit alpha-A (141 aa).

In terms of domain architecture, Globin spans 1 to 141 (VLSAADKTNV…VGTVLTAKYR (141 aa)). His58 lines the O2 pocket. Residue His87 participates in heme b binding.

It belongs to the globin family. As to quaternary structure, heterotetramer of two alpha chains and two beta chains. Red blood cells.

Its function is as follows. Involved in oxygen transport from the lung to the various peripheral tissues. The chain is Hemoglobin subunit alpha-A (HBAA) from Branta canadensis (Canada goose).